The following is a 147-amino-acid chain: Ubiquitin-conjugating enzyme E2 D3 (147 aa).

A UBC core domain is found at 1–147; the sequence is MALKRINKEL…SREWTQKYAM (147 aa). Cys21 and Cys107 form a disulfide bridge. The Glycyl thioester intermediate role is filled by Cys85.

The protein belongs to the ubiquitin-conjugating enzyme family. Interacts with SCF (SKP1-CUL1-F-box protein) E3 ubiquitin ligase complex; when Cullin is neddylated, the interaction between the E2 and the SCF complex is strengthened. Interacts with DAPK3. Interacts with BRCA1; the DNA damage checkpoint promotes the association with BRCA1 after ionizing radiation. Interacts non-covalently with ubiquitin. Interacts with E3 ubiquitin-protein ligase CBLC. Interacts with UBTD1. Interacts with RIGI and RNF135; involved in RIGI ubiquitination and activation. Post-translationally, phosphorylated by AURKB.

Its subcellular location is the cell membrane. It is found in the endosome membrane. The enzyme catalyses S-ubiquitinyl-[E1 ubiquitin-activating enzyme]-L-cysteine + [E2 ubiquitin-conjugating enzyme]-L-cysteine = [E1 ubiquitin-activating enzyme]-L-cysteine + S-ubiquitinyl-[E2 ubiquitin-conjugating enzyme]-L-cysteine.. It carries out the reaction S-ubiquitinyl-[E1 ubiquitin-activating enzyme]-L-cysteine + [acceptor protein]-L-lysine = [E1 ubiquitin-activating enzyme]-L-cysteine + N(6)-monoubiquitinyl-[acceptor protein]-L-lysine.. Its pathway is protein modification; protein ubiquitination. Functionally, accepts ubiquitin from the E1 complex and catalyzes its covalent attachment to other proteins. In vitro catalyzes 'Lys-11'-, as well as 'Lys-48'-linked polyubiquitination. Cooperates with the E2 CDC34 and the SCF(FBXW11) E3 ligase complex for the polyubiquitination of NFKBIA leading to its subsequent proteasomal degradation. Acts as an initiator E2, priming the phosphorylated NFKBIA target at positions 'Lys-21' and/or 'Lys-22' with a monoubiquitin. Ubiquitin chain elongation is then performed by CDC34, building ubiquitin chains from the UBE2D3-primed NFKBIA-linked ubiquitin. Also acts as an initiator E2, in conjunction with RNF8, for the priming of PCNA. Monoubiquitination of PCNA, and its subsequent polyubiquitination, are essential events in the operation of the DNA damage tolerance (DDT) pathway that is activated after DNA damage caused by UV or chemical agents during S-phase. Associates with the BRCA1/BARD1 E3 ligase complex to perform ubiquitination at DNA damage sites following ionizing radiation leading to DNA repair. Targets DAPK3 for ubiquitination which influences promyelocytic leukemia protein nuclear body (PML-NB) formation in the nucleus. In conjunction with the MDM2 and TOPORS E3 ligases, functions ubiquitination of p53/TP53. In conjunction with the CBL E3 ligase, targets EGFR for polyubiquitination at the plasma membrane as well as during its internalization and transport on endosomes. In conjunction with the STUB1 E3 quality control E3 ligase, ubiquitinates unfolded proteins to catalyze their immediate destruction. Together with RNF135, catalyzes the viral RNA-dependent 'Lys-63'-linked polyubiquitination of RIGI to activate the downstream signaling pathway that leads to interferon beta production. Together with ZNF598, catalyzes ubiquitination of 40S ribosomal proteins in response to ribosome collisions. In cooperation with the GATOR2 complex, catalyzes 'Lys-6'-linked ubiquitination of NPRL2. This is Ubiquitin-conjugating enzyme E2 D3 (UBE2D3) from Bos taurus (Bovine).